The primary structure comprises 316 residues: Aspartate carbamoyltransferase catalytic subunit (316 aa).

Carbamoyl phosphate-binding residues include arginine 58 and threonine 59. L-aspartate is bound at residue lysine 86. Carbamoyl phosphate-binding residues include arginine 108, histidine 136, and glutamine 139. Positions 169 and 223 each coordinate L-aspartate. Residues glycine 264 and proline 265 each contribute to the carbamoyl phosphate site.

The protein belongs to the aspartate/ornithine carbamoyltransferase superfamily. ATCase family. In terms of assembly, heterododecamer (2C3:3R2) of six catalytic PyrB chains organized as two trimers (C3), and six regulatory PyrI chains organized as three dimers (R2).

It catalyses the reaction carbamoyl phosphate + L-aspartate = N-carbamoyl-L-aspartate + phosphate + H(+). Its pathway is pyrimidine metabolism; UMP biosynthesis via de novo pathway; (S)-dihydroorotate from bicarbonate: step 2/3. Its function is as follows. Catalyzes the condensation of carbamoyl phosphate and aspartate to form carbamoyl aspartate and inorganic phosphate, the committed step in the de novo pyrimidine nucleotide biosynthesis pathway. This Granulibacter bethesdensis (strain ATCC BAA-1260 / CGDNIH1) protein is Aspartate carbamoyltransferase catalytic subunit.